Here is a 263-residue protein sequence, read N- to C-terminus: Ribosomal RNA large subunit methyltransferase E (263 aa).

The interval 1–34 is disordered; sequence MSSAEGPKSGGGSKGSKSEASSRVRGSAPTGSRD. Positions 102, 104, 126, 142, and 166 each coordinate S-adenosyl-L-methionine. The active-site Proton acceptor is K206.

The protein belongs to the class I-like SAM-binding methyltransferase superfamily. RNA methyltransferase RlmE family.

The protein localises to the cytoplasm. The catalysed reaction is uridine(2552) in 23S rRNA + S-adenosyl-L-methionine = 2'-O-methyluridine(2552) in 23S rRNA + S-adenosyl-L-homocysteine + H(+). Specifically methylates the uridine in position 2552 of 23S rRNA at the 2'-O position of the ribose in the fully assembled 50S ribosomal subunit. The protein is Ribosomal RNA large subunit methyltransferase E of Rhodospirillum rubrum (strain ATCC 11170 / ATH 1.1.1 / DSM 467 / LMG 4362 / NCIMB 8255 / S1).